The primary structure comprises 750 residues: Olfactomedin-like protein 2B (750 aa).

The N-terminal stretch at 1-22 (MAKPRLLVLYFALIVVPAWVSS) is a signal peptide. Coiled coils occupy residues 40–68 (AEDE…KVKA) and 179–213 (KLEE…GKEN). Residues asparagine 187 and asparagine 213 are each glycosylated (N-linked (GlcNAc...) asparagine). Disordered regions lie at residues 346 to 437 (TRRP…PPAV) and 452 to 484 (VPPT…PEEE). Composition is skewed to polar residues over residues 354 to 384 (QGHS…SDPS) and 393 to 413 (PTLQ…LQPS). The segment covering 416–430 (VPATTVAHTATQQPA) has biased composition (low complexity). Residues 493–750 (RCKDTLSTIT…QVTYHVIFAY (258 aa)) enclose the Olfactomedin-like domain. An intrachain disulfide couples cysteine 494 to cysteine 680. The N-linked (GlcNAc...) asparagine glycan is linked to asparagine 695.

In terms of assembly, homodimer. Binds to heparin and chondroitin sulfate E. In terms of processing, O-glycosylated and N-glycosylated.

Its subcellular location is the secreted. This Homo sapiens (Human) protein is Olfactomedin-like protein 2B (OLFML2B).